The chain runs to 288 residues: Diaminopimelate epimerase (288 aa).

2 residues coordinate substrate: asparagine 14 and asparagine 67. Cysteine 76 serves as the catalytic Proton donor. Substrate is bound by residues 77–78 (GN), asparagine 166, asparagine 199, and 217–218 (ER). Cysteine 226 functions as the Proton acceptor in the catalytic mechanism. 227 to 228 (GT) contributes to the substrate binding site.

Belongs to the diaminopimelate epimerase family. Homodimer.

It localises to the cytoplasm. It carries out the reaction (2S,6S)-2,6-diaminopimelate = meso-2,6-diaminopimelate. Its pathway is amino-acid biosynthesis; L-lysine biosynthesis via DAP pathway; DL-2,6-diaminopimelate from LL-2,6-diaminopimelate: step 1/1. Its function is as follows. Catalyzes the stereoinversion of LL-2,6-diaminopimelate (L,L-DAP) to meso-diaminopimelate (meso-DAP), a precursor of L-lysine and an essential component of the bacterial peptidoglycan. The protein is Diaminopimelate epimerase of Bacillus cereus (strain AH820).